Reading from the N-terminus, the 185-residue chain is Large ribosomal subunit protein uL5 (185 aa).

This sequence belongs to the universal ribosomal protein uL5 family. In terms of assembly, part of the 50S ribosomal subunit; part of the 5S rRNA/L5/L18/L25 subcomplex. Contacts the 5S rRNA and the P site tRNA. Forms a bridge to the 30S subunit in the 70S ribosome.

Its function is as follows. This is one of the proteins that bind and probably mediate the attachment of the 5S RNA into the large ribosomal subunit, where it forms part of the central protuberance. In the 70S ribosome it contacts protein S13 of the 30S subunit (bridge B1b), connecting the 2 subunits; this bridge is implicated in subunit movement. Contacts the P site tRNA; the 5S rRNA and some of its associated proteins might help stabilize positioning of ribosome-bound tRNAs. This is Large ribosomal subunit protein uL5 from Sinorhizobium medicae (strain WSM419) (Ensifer medicae).